Consider the following 1444-residue polypeptide: ABC transporter G family member 39 (1444 aa).

The tract at residues 1 to 36 is disordered; the sequence is MDIVRMGSVASGGGSVRRTASSWRGTSGRSDAFGRS. The span at 19–29 shows a compositional bias: polar residues; it reads TASSWRGTSGR. Residues 154-426 form the ABC transporter 1 domain; that stretch reads LSAMRIVSSG…FEAMGFKCPE (273 aa). 187-194 is a binding site for ATP; it reads GPPGSGKT. The region spanning 504-717 is the ABC transmembrane type-2 1 domain; that stretch reads ELTKACFSRE…AQNAIAVNEF (214 aa). 6 helical membrane passes run 522–542, 555–575, 610–630, 642–662, 667–687, and 754–774; these read FVYI…MTVF, GAIF…NGFA, IPIS…VMGF, VLLV…AALG, VADT…GFLI, and IGVG…ILFL. Positions 846–1098 constitute an ABC transporter 2 domain; it reads ITFDNIRYSV…HLINYFEGIQ (253 aa). 891–898 is an ATP binding site; that stretch reads GVSGAGKT. In terms of domain architecture, ABC transmembrane type-2 2 spans 1171 to 1385; the sequence is TQCMACLWKQ…TLYGLVASQY (215 aa). Transmembrane regions (helical) follow at residues 1192-1212, 1220-1240, 1278-1298, 1305-1325, 1335-1355, 1362-1382, and 1414-1434; these read ATRI…FLNL, LDLF…GIQN, IPHI…LIGF, FFWY…YGMM, IAAI…GFLI, IWWR…GLVA, and LGYV…VFAF.

This sequence belongs to the ABC transporter superfamily. ABCG family. PDR (TC 3.A.1.205) subfamily.

The protein localises to the membrane. Functionally, may be a general defense protein. This chain is ABC transporter G family member 39, found in Oryza sativa subsp. japonica (Rice).